A 360-amino-acid chain; its full sequence is Peptide chain release factor 1 (360 aa).

At Gln237 the chain carries N5-methylglutamine.

It belongs to the prokaryotic/mitochondrial release factor family. In terms of processing, methylated by PrmC. Methylation increases the termination efficiency of RF1.

It localises to the cytoplasm. Its function is as follows. Peptide chain release factor 1 directs the termination of translation in response to the peptide chain termination codons UAG and UAA. This chain is Peptide chain release factor 1, found in Pseudomonas syringae pv. syringae (strain B728a).